A 347-amino-acid polypeptide reads, in one-letter code: Sulfate/thiosulfate import ATP-binding protein CysA 1 (347 aa).

Positions 3-237 constitute an ABC transporter domain; sequence VRVESLRKEF…PVSPFVYGFI (235 aa). 35–42 contacts ATP; sequence GPSGSGKT.

It belongs to the ABC transporter superfamily. Sulfate/tungstate importer (TC 3.A.1.6) family. The complex is composed of two ATP-binding proteins (CysA), two transmembrane proteins (CysT and CysW) and a solute-binding protein (CysP).

It localises to the cell inner membrane. It carries out the reaction sulfate(out) + ATP + H2O = sulfate(in) + ADP + phosphate + H(+). The catalysed reaction is thiosulfate(out) + ATP + H2O = thiosulfate(in) + ADP + phosphate + H(+). Functionally, part of the ABC transporter complex CysAWTP involved in sulfate/thiosulfate import. Responsible for energy coupling to the transport system. This chain is Sulfate/thiosulfate import ATP-binding protein CysA 1, found in Rhizobium meliloti (strain 1021) (Ensifer meliloti).